A 165-amino-acid polypeptide reads, in one-letter code: Ribosome maturation factor RimM (165 aa).

One can recognise a PRC barrel domain in the interval 89–161; sequence EADTHYIVDL…KIVVKPVRQW (73 aa).

It belongs to the RimM family. In terms of assembly, binds ribosomal protein uS19.

The protein resides in the cytoplasm. In terms of biological role, an accessory protein needed during the final step in the assembly of 30S ribosomal subunit, possibly for assembly of the head region. Essential for efficient processing of 16S rRNA. May be needed both before and after RbfA during the maturation of 16S rRNA. It has affinity for free ribosomal 30S subunits but not for 70S ribosomes. This Clostridium botulinum (strain Alaska E43 / Type E3) protein is Ribosome maturation factor RimM.